The sequence spans 255 residues: 3-dehydroquinate dehydratase (255 aa).

3-dehydroquinate-binding positions include Glu-46 to Arg-48 and Arg-82. The active-site Proton donor/acceptor is the His-143. The active-site Schiff-base intermediate with substrate is the Lys-170. Residues Arg-213, Ser-232, and Gln-236 each contribute to the 3-dehydroquinate site.

This sequence belongs to the type-I 3-dehydroquinase family. Homodimer.

It carries out the reaction 3-dehydroquinate = 3-dehydroshikimate + H2O. It participates in metabolic intermediate biosynthesis; chorismate biosynthesis; chorismate from D-erythrose 4-phosphate and phosphoenolpyruvate: step 3/7. Its function is as follows. Involved in the third step of the chorismate pathway, which leads to the biosynthesis of aromatic amino acids. Catalyzes the cis-dehydration of 3-dehydroquinate (DHQ) and introduces the first double bond of the aromatic ring to yield 3-dehydroshikimate. This Bacillus subtilis (strain 168) protein is 3-dehydroquinate dehydratase.